The following is a 283-amino-acid chain: Agmatinase (283 aa).

A divalent metal cation contacts are provided by H112, D131, H133, D135, D211, and D213.

This sequence belongs to the arginase family. Agmatinase subfamily. Homotetramer. It depends on a divalent metal cation as a cofactor.

The enzyme catalyses agmatine + H2O = urea + putrescine. The protein operates within amine and polyamine biosynthesis; putrescine biosynthesis via agmatine pathway; putrescine from agmatine: step 1/1. Its activity is regulated as follows. Inhibited by putrescine. Activity is not affected by arginine and ornithine. Catalyzes the formation of putrescine from agmatine. Cannot use arginine. The polypeptide is Agmatinase (Pyrococcus horikoshii (strain ATCC 700860 / DSM 12428 / JCM 9974 / NBRC 100139 / OT-3)).